A 680-amino-acid polypeptide reads, in one-letter code: DNA-directed RNA polymerase subunit beta' (680 aa).

Cys-69, Cys-71, Cys-87, and Cys-90 together coordinate Zn(2+). Mg(2+)-binding residues include Asp-489, Asp-491, and Asp-493.

Belongs to the RNA polymerase beta' chain family. RpoC1 subfamily. In plastids the minimal PEP RNA polymerase catalytic core is composed of four subunits: alpha, beta, beta', and beta''. When a (nuclear-encoded) sigma factor is associated with the core the holoenzyme is formed, which can initiate transcription. Mg(2+) is required as a cofactor. It depends on Zn(2+) as a cofactor.

The protein resides in the plastid. The protein localises to the chloroplast. The enzyme catalyses RNA(n) + a ribonucleoside 5'-triphosphate = RNA(n+1) + diphosphate. Its function is as follows. DNA-dependent RNA polymerase catalyzes the transcription of DNA into RNA using the four ribonucleoside triphosphates as substrates. The chain is DNA-directed RNA polymerase subunit beta' from Cucumis sativus (Cucumber).